A 198-amino-acid chain; its full sequence is Holliday junction branch migration complex subunit RuvA (198 aa).

The domain I stretch occupies residues 1–63 (MIALLTGQIA…EDAIQLYGFR (63 aa)). The domain II stretch occupies residues 64–142 (TSLEKSFFQL…KLDLSSVVVP (79 aa)). Residues 143–153 (EPRQMPEDDLL) form a flexible linker region. The interval 153–198 (LEDVVSALLNLGYKEPQVRKVLAGLNPGSDASLEGVLKQALKSLMR) is domain III.

It belongs to the RuvA family. In terms of assembly, homotetramer. Forms an RuvA(8)-RuvB(12)-Holliday junction (HJ) complex. HJ DNA is sandwiched between 2 RuvA tetramers; dsDNA enters through RuvA and exits via RuvB. An RuvB hexamer assembles on each DNA strand where it exits the tetramer. Each RuvB hexamer is contacted by two RuvA subunits (via domain III) on 2 adjacent RuvB subunits; this complex drives branch migration. In the full resolvosome a probable DNA-RuvA(4)-RuvB(12)-RuvC(2) complex forms which resolves the HJ.

It is found in the cytoplasm. Its function is as follows. The RuvA-RuvB-RuvC complex processes Holliday junction (HJ) DNA during genetic recombination and DNA repair, while the RuvA-RuvB complex plays an important role in the rescue of blocked DNA replication forks via replication fork reversal (RFR). RuvA specifically binds to HJ cruciform DNA, conferring on it an open structure. The RuvB hexamer acts as an ATP-dependent pump, pulling dsDNA into and through the RuvAB complex. HJ branch migration allows RuvC to scan DNA until it finds its consensus sequence, where it cleaves and resolves the cruciform DNA. The protein is Holliday junction branch migration complex subunit RuvA of Pelobacter propionicus (strain DSM 2379 / NBRC 103807 / OttBd1).